The chain runs to 200 residues: Phospholipase A2 inhibitor gamma subunit B (200 aa).

A signal peptide spans Met1 to Cys19. 8 disulfides stabilise this stretch: Cys22–Cys46, Cys25–Cys32, Cys39–Cys67, Cys73–Cys94, Cys95–Cys100, Cys120–Cys145, Cys138–Cys165, and Cys171–Cys191. The N-linked (GlcNAc...) asparagine glycan is linked to Asn33.

It belongs to the CNF-like-inhibitor family. As to quaternary structure, heterodimer of subunit A and subunit B. In terms of tissue distribution, expressed by the liver.

Its subcellular location is the secreted. In terms of biological role, inhibits the enzymatic activity of phospholipase A2 (PA2). The sequence is that of Phospholipase A2 inhibitor gamma subunit B from Gloydius brevicaudus siniticus (Chinese mamushi).